Reading from the N-terminus, the 846-residue chain is Homeobox protein 12 (846 aa).

8 stretches are compositionally biased toward low complexity: residues 78-94 (IIGS…VQAT), 160-170 (PLSSSSTVVPA), 237-249 (GNHN…YNYN), 289-301 (QPQS…QLQP), 309-321 (LQPQ…QSQQ), 331-352 (NNNN…NNNN), 394-443 (NYNQ…SNSN), and 458-482 (NNNN…QQIY). Disordered regions lie at residues 78–103 (IIGS…PSSS), 151–177 (IVQP…PPSV), 230–249 (NGNG…YNYN), 286–374 (GTKQ…SSSP), 394–482 (NYNQ…QQIY), and 515–571 (FKQN…NNQF). Residues 524 to 546 (NNDDDDDDDDDEEEEEEEEDDND) are compositionally biased toward acidic residues. Residues 553–604 (SYDEENNNNNNNNNNNNQFKNESIIIGDNYYEIINDRIKSIKQKLHFLEKNS) are a coiled coil. Low complexity predominate over residues 559–569 (NNNNNNNNNNN). A DNA-binding region (homeobox) is located at residues 773-835 (DKKNRRTLND…NKRSREKNQR (63 aa)).

The protein resides in the nucleus. Functionally, putative transcription factor. This chain is Homeobox protein 12 (hbx12), found in Dictyostelium discoideum (Social amoeba).